We begin with the raw amino-acid sequence, 171 residues long: Transcriptional repressor NrdR (171 aa).

Residues 1 to 21 form a disordered region; the sequence is MQCPHCQHTDSRVLESRSSEN. Residues 3–34 fold into a zinc finger; the sequence is CPHCQHTDSRVLESRSSENGQSIRRRRECLQC. Residues 7–18 are compositionally biased toward basic and acidic residues; that stretch reads QHTDSRVLESRS. The ATP-cone domain maps to 49–139; the sequence is ITVIKKDGKR…VYGNFQGIRD (91 aa).

This sequence belongs to the NrdR family. Zn(2+) serves as cofactor.

Its function is as follows. Negatively regulates transcription of bacterial ribonucleotide reductase nrd genes and operons by binding to NrdR-boxes. This Microcystis aeruginosa (strain NIES-843 / IAM M-2473) protein is Transcriptional repressor NrdR.